Reading from the N-terminus, the 656-residue chain is Vacuolar amino acid transporter 3 (656 aa).

The interval Met1–Val109 is disordered. A compositionally biased stretch (polar residues) spans Asn15–Ser28. Phosphoserine is present on residues Ser37 and Ser53. Residues Ile50–Asn71 show a composition bias toward polar residues. Residues Ile75 to Ser97 show a composition bias toward basic and acidic residues. Ser172 carries the phosphoserine modification. 11 helical membrane passes run Ala280–Phe300, Phe307–Ile327, Phe351–Phe371, Glu389–Val409, Ala419–Ile439, Phe457–Ile477, Val494–Gly514, Leu537–Ile557, Tyr578–Leu598, Phe601–Leu621, and Asp636–Phe656.

Belongs to the amino acid/polyamine transporter 2 family.

The protein resides in the endoplasmic reticulum membrane. Its subcellular location is the vacuole membrane. Functionally, involved in amino acid efflux from the vacuole to the cytoplasm. Capable of transporting large neutral amino acids including tyrosine, glutamine, asparagine, isoleucine and leucine. Required for spore formation. The chain is Vacuolar amino acid transporter 3 (avt3) from Schizosaccharomyces pombe (strain 972 / ATCC 24843) (Fission yeast).